Consider the following 3619-residue polypeptide: BEACH domain-containing protein lvsA (3619 aa).

Disordered regions lie at residues 1–117, 648–709, 1101–1129, 1367–1390, 1636–1658, 1893–1924, and 1964–1999; these read MFRR…NNNN, KIDD…EKEA, NNNNNNSSNNSNNSNNSNNNNNNNNNNDQ, SPNLTGLQNNNNNNNNSGGSNSKK, IPTPSSSSSSSSTSSTSSRRKSI, SSISSNISSSSSSSTLVNSSNSNNNNNTPTSG, and QQAALKKKNRMSIQSSPFQSKNLGTGGDDSVTNTPN. Residues 17 to 30 show a composition bias toward pro residues; it reads PQVPHSPGHPPHQP. Low complexity-rich tracts occupy residues 31–59, 68–87, 97–117, 656–689, 1101–1127, 1375–1387, 1640–1652, and 1893–1923; these read PQQQQQQQQQQQQQQQQQQQQQQQQQQPQ, SVSSPIGSTTSSNSTSSFSS, EESSSINSNNNNNNNKNNNNN, NNNNNNNNNNNNNNNNNNNDNDNNNNNDNNNEEN, NNNNNNSSNNSNNSNNSNNNNNNNNNN, NNNNNNNNSGGSN, SSSSSSSSTSSTS, and SSISSNISSSSSSSTLVNSSNSNNNNNTPTS. One copy of the WD 1 repeat lies at 94-133; that stretch reads SATEESSSINSNNNNNNNKNNNNNNNSNIIESNINVWTIM. The segment covering 1974–1986 has biased composition (polar residues); it reads MSIQSSPFQSKNL. Residues 2234–2258 adopt a coiled-coil conformation; that stretch reads VKILEKLEADRVGLQKTVQSLYKSL. A WD 2 repeat occupies 2294-2335; the sequence is LDSDFMNAFCYPLYKLVISDQHEHVDNSIKLWRLLLSLKTSS. 2 disordered regions span residues 2403-2457 and 2596-2785; these read KKQH…ITKK and NTSS…SEDE. Basic and acidic residues predominate over residues 2440-2452; the sequence is DRKDQSHQEEKSK. Over residues 2596–2662 the composition is skewed to low complexity; that stretch reads NTSSITNNNN…TTTPQQSSSQ (67 aa). 2 stretches are compositionally biased toward polar residues: residues 2663–2687 and 2694–2725; these read IKVSSPELSSNEITPPTSPVQSSSE and KLQSSTVEGQLSRNPSSSELFNDNSSTISEEN. Low complexity-rich tracts occupy residues 2726 to 2735 and 2742 to 2764; these read SSLTSASTTL and TQTTTTTTTSTPTTQSSVATTTT. A BEACH-type PH domain is found at 2807 to 2932; sequence KDPRLNGIMY…TRDEVYHTLV (126 aa). Positions 2940 to 2971 are disordered; sequence TIGGDAQGITGGQTGNDDNDDHHGGGGGRGVR. Positions 2944–2953 are enriched in gly residues; sequence DAQGITGGQT. Residues 2959–2971 show a composition bias toward basic and acidic residues; it reads DDHHGGGGGRGVR. A BEACH domain is found at 2972 to 3270; it reads DRFTSIWRKS…QLFDKPHPKR (299 aa). WD repeat units lie at residues 3347–3386, 3389–3428, 3431–3471, 3474–3518, and 3563–3602; these read HHDGPLTCLTATEDGRICVSGGSDSLICVYNLKRFSLAKR, GHTGSITCVSASRPYSIIVSGSDDRTCIIWDLNRLCYVRS, AHEG…NYKT, IAND…LPDN, and SHSTAITSIFLTNDQQKFYTGDITGRVCMWSDNEASQVKQ. A disordered region spans residues 3516–3539; sequence PDNNNSNNNNNNNNNNNNNATQIP. Residues 3518 to 3534 show a composition bias toward low complexity; it reads NNNSNNNNNNNNNNNNN.

It localises to the contractile vacuole membrane. Functionally, involved in myosin-independent cytokinesis and early steps of phagocytosis. Also involved in contractile vacuole-mediated osmoregulation. This Dictyostelium discoideum (Social amoeba) protein is BEACH domain-containing protein lvsA (lvsA).